The primary structure comprises 245 residues: Probable transcriptional regulatory protein TP_0474 (245 aa).

This sequence belongs to the TACO1 family.

It is found in the cytoplasm. This is Probable transcriptional regulatory protein TP_0474 from Treponema pallidum (strain Nichols).